The primary structure comprises 496 residues: MAGTGLFAEILDGEVYKYYADGEWKTSSSGKSVAIMNPATRKTQYKVQACTQEEVNAVMELAKSAQKSWAKTPLWKRAELLHKAAAILKDNKAPMAESLVKEIAKPAKDSVTEVVRSGDLISYCAEEGVRILGEGKFLLSDSFPGNDRTKYCLTSKIPLGVVLAIPPFNYPVNLAVSKIAPALIAGNSLVLKPPTQGAVSCLHMVHCFHLAGFPKGLISCITGKGSEIGDFLTMHPAVNCISFTGGDTGISISKKAGMIPLQMELGGKDACIVLDDADLDLVASNIIKGGFSYSGQRCTAVKVVLVMESVADELVEKVKAKVAKLTVGPPEENSDITAVVSESSANFIEGLVMDAKEKGATFCQEYKREGNLIWPLLLDNVRPDMRIAWEEPFGPVVPVLRINSVEEGINHCNASNFGLQGCVFTKDINKAILISDAMETGTVQINSAPARGPDHFPFQGLKDSGIGSQGVTNSINLMTKVKTTVINLPTPSYSMG.

Ala-2 carries the N-acetylalanine modification. Residue Thr-4 is modified to Phosphothreonine. Residues Arg-116 and Asn-169–Tyr-170 contribute to the substrate site. Positions 192, 195, and 230 each coordinate NADP(+). Gly-245–Gly-249 is a binding site for NAD(+). Glu-264 serves as the catalytic Proton acceptor. Arg-297–Thr-299 is a binding site for substrate. Cys-298 (nucleophile) is an active-site residue. Residue Glu-391 participates in NADP(+) binding. Arg-451 is a substrate binding site.

It belongs to the aldehyde dehydrogenase family.

Its subcellular location is the cytoplasm. It catalyses the reaction D-glyceraldehyde 3-phosphate + NADP(+) + H2O = (2R)-3-phosphoglycerate + NADPH + 2 H(+). Important as a means of generating NADPH for biosynthetic reactions. This is NADP-dependent glyceraldehyde-3-phosphate dehydrogenase (ALDH11A3) from Arabidopsis thaliana (Mouse-ear cress).